A 362-amino-acid polypeptide reads, in one-letter code: MAAVTAAAVSTSAAAAVTKASPSPAHCFLPCPPRTRAAHQRGLLLRAQVSTTDAAAVAAAPAKKEKISKKHDEGVVTNKYRPKEPYVGKCLLNTKITADDAPGETWHMVFSTEGEIPYREGQSIGVIADGVDKNGKPHKLRLYSIASSALGDFGDSKTVSLCVKRLVYTNDQGEIVKGVCSNFLCDLKPGSDVKITGPVGKEMLMPKDPNANIIMLATGTGIAPFRSFLWKMFFEKYDDYKFNGLAWLFLGVPTSSSLLYKEEFDKMKAKAPENFRVDYAVSREQTNAQGEKMYIQTRMAEYKEELWELLKKDHTYVYMCGLKGMEKGIDDIMVSLAAKDGIDWADYKKQLKKGEQWNVEVY.

A chloroplast-targeting transit peptide spans 1 to 62 (MAAVTAAAVS…DAAAVAAAPA (62 aa)). In terms of domain architecture, FAD-binding FR-type spans 83–205 (KEPYVGKCLL…TGPVGKEMLM (123 aa)). FAD is bound by residues 141-144 (RLYS), 162-164 (CVK), Tyr168, 179-181 (VCS), and Thr220. The NADP(+) site is built by Ser144 and Lys164. A disulfide bridge connects residues Cys180 and Cys185. Ser181 bears the Phosphoserine mark. NADP(+) contacts are provided by residues Thr220, 252-253 (VP), 282-283 (SR), Lys292, 321-322 (GL), and Glu360.

This sequence belongs to the ferredoxin--NADP reductase type 1 family. As to quaternary structure, component of high molecular weight thylakoid LFNRs-containing protein complexes containing LIR1, LFNR1, LFNR2, TIC62 and TROL proteins. Interacts directly with LIR1 and TIC62; LIR1 increases the affinity of LFNR1 and LFNR2 for TIC62. FAD is required as a cofactor. May form interchain disulfide bonds with LIR1.

The protein localises to the plastid. It is found in the chloroplast stroma. Its subcellular location is the chloroplast thylakoid membrane. The catalysed reaction is 2 reduced [2Fe-2S]-[ferredoxin] + NADP(+) + H(+) = 2 oxidized [2Fe-2S]-[ferredoxin] + NADPH. It functions in the pathway energy metabolism; photosynthesis. Functionally, may play a key role in regulating the relative amounts of cyclic and non-cyclic electron flow to meet the demands of the plant for ATP and reducing power. The protein is Ferredoxin--NADP reductase, leaf isozyme 1, chloroplastic of Oryza sativa subsp. japonica (Rice).